The following is a 286-amino-acid chain: GTP-binding protein 8 (286 aa).

The EngB-type G domain maps to 105–278 (KQPEVCFMGR…RCFIAHVTGK (174 aa)). GTP-binding positions include 113-120 (GRSNVGKS), 142-146 (GHTKK), 160-163 (DMPG), 222-225 (TKID), and 257-259 (VSS). Mg(2+) contacts are provided by S120 and T144.

Belongs to the TRAFAC class TrmE-Era-EngA-EngB-Septin-like GTPase superfamily. EngB GTPase family. The cofactor is Mg(2+).

The polypeptide is GTP-binding protein 8 (gtpbp8) (Danio rerio (Zebrafish)).